A 130-amino-acid polypeptide reads, in one-letter code: Riboflavin kinase (130 aa).

A CDP-binding site is contributed by 12-17 (GLGVGA). Residues Thr39 and Asn41 each coordinate Mg(2+). 2 residues coordinate FMN: Thr90 and Glu98. 103-106 (KNLR) is a binding site for CDP.

Belongs to the archaeal riboflavin kinase family. Mg(2+) is required as a cofactor.

The catalysed reaction is riboflavin + CTP = CDP + FMN + H(+). The protein operates within cofactor biosynthesis; FMN biosynthesis; FMN from riboflavin (CTP route): step 1/1. In terms of biological role, catalyzes the CTP-dependent phosphorylation of riboflavin (vitamin B2) to form flavin mononucleotide (FMN). This Staphylothermus marinus (strain ATCC 43588 / DSM 3639 / JCM 9404 / F1) protein is Riboflavin kinase.